The chain runs to 782 residues: Zinc finger Y-chromosomal protein 1 (782 aa).

Disordered regions lie at residues 211-233 and 360-386; these read ADLE…SKLD and LNQD…ESKQ. The span at 217 to 229 shows a compositional bias: polar residues; sequence SEVTMNAESGTDS. The Nuclear localization signal signature appears at 372-382; it reads PKQKSKKKKRP. Positions 373-382 are enriched in basic residues; it reads KQKSKKKKRP. 13 C2H2-type zinc fingers span residues 403–425, 434–456, 466–488, 497–520, 526–548, 554–577, 583–605, 611–634, 640–662, 668–691, 697–719, 725–748, and 754–777; these read YPCM…TKNH, YHCT…MESH, TECD…KTMH, CKCK…LVVH, HICG…IRVH, YECQ…KSKH, LKCG…AVLH, HQCS…ISVH, HKCD…VATH, HQCR…LSAH, FKCK…MKTH, YQCE…ISIH, and HSCD…MRHH.

This sequence belongs to the krueppel C2H2-type zinc-finger protein family. ZFX/ZFY subfamily.

The protein localises to the nucleus. Probable transcriptional activator. Binds to the consensus sequence 5'-AGGCCY-3'. This chain is Zinc finger Y-chromosomal protein 1 (Zfy1), found in Mus musculus (Mouse).